A 329-amino-acid chain; its full sequence is 4-hydroxythreonine-4-phosphate dehydrogenase (329 aa).

Substrate-binding residues include H136 and T137. A divalent metal cation-binding residues include H166, H211, and H266. Positions 274, 283, and 292 each coordinate substrate.

This sequence belongs to the PdxA family. As to quaternary structure, homodimer. The cofactor is Zn(2+). Mg(2+) serves as cofactor. Co(2+) is required as a cofactor.

The protein resides in the cytoplasm. It carries out the reaction 4-(phosphooxy)-L-threonine + NAD(+) = 3-amino-2-oxopropyl phosphate + CO2 + NADH. It participates in cofactor biosynthesis; pyridoxine 5'-phosphate biosynthesis; pyridoxine 5'-phosphate from D-erythrose 4-phosphate: step 4/5. Catalyzes the NAD(P)-dependent oxidation of 4-(phosphooxy)-L-threonine (HTP) into 2-amino-3-oxo-4-(phosphooxy)butyric acid which spontaneously decarboxylates to form 3-amino-2-oxopropyl phosphate (AHAP). This Neisseria meningitidis serogroup A / serotype 4A (strain DSM 15465 / Z2491) protein is 4-hydroxythreonine-4-phosphate dehydrogenase.